Reading from the N-terminus, the 213-residue chain is Pyridoxine/pyridoxamine 5'-phosphate oxidase (213 aa).

Residues 8–11 and Lys-66 each bind substrate; that span reads RREY. FMN is bound by residues 61–66, 76–77, Arg-82, Lys-83, and Gln-105; these read RIVLLK and YT. Positions 123, 127, and 131 each coordinate substrate. FMN-binding positions include 140 to 141 and Trp-185; that span reads QS. 191 to 193 serves as a coordination point for substrate; it reads RLH. Arg-195 contributes to the FMN binding site.

This sequence belongs to the pyridoxamine 5'-phosphate oxidase family. In terms of assembly, homodimer. FMN is required as a cofactor.

It catalyses the reaction pyridoxamine 5'-phosphate + O2 + H2O = pyridoxal 5'-phosphate + H2O2 + NH4(+). It carries out the reaction pyridoxine 5'-phosphate + O2 = pyridoxal 5'-phosphate + H2O2. It participates in cofactor metabolism; pyridoxal 5'-phosphate salvage; pyridoxal 5'-phosphate from pyridoxamine 5'-phosphate: step 1/1. It functions in the pathway cofactor metabolism; pyridoxal 5'-phosphate salvage; pyridoxal 5'-phosphate from pyridoxine 5'-phosphate: step 1/1. Catalyzes the oxidation of either pyridoxine 5'-phosphate (PNP) or pyridoxamine 5'-phosphate (PMP) into pyridoxal 5'-phosphate (PLP). The protein is Pyridoxine/pyridoxamine 5'-phosphate oxidase of Pseudoalteromonas atlantica (strain T6c / ATCC BAA-1087).